Here is a 240-residue protein sequence, read N- to C-terminus: MIIAANLKTNLTREKTAKYIKEVESFLNQHNISQEVFVFPAISNLISSSANVVVGAQNAYPTQNGAFTGEIGNEQLEEFGIKTILIGHSERRHVIGETQDSLIVKFNFYKNLGFKIIYCVGEPLHIREMGHEKMMEYISAQYVGIDAAYENLIIAYEPVWAIGTGLTPTLEDIKMIHKELKAKSTAPLLYGGSVKVTNVEEVLALDGVDGVLVGSAALYVEHFCTMCEYAQNIDKKNKKL.

6-8 serves as a coordination point for substrate; it reads NLK. Residue H88 is the Electrophile of the active site. The Proton acceptor role is filled by E157. Substrate-binding residues include G163 and S193.

The protein belongs to the triosephosphate isomerase family. In terms of assembly, homodimer.

It is found in the cytoplasm. The enzyme catalyses D-glyceraldehyde 3-phosphate = dihydroxyacetone phosphate. Its pathway is carbohydrate biosynthesis; gluconeogenesis. It participates in carbohydrate degradation; glycolysis; D-glyceraldehyde 3-phosphate from glycerone phosphate: step 1/1. Functionally, involved in the gluconeogenesis. Catalyzes stereospecifically the conversion of dihydroxyacetone phosphate (DHAP) to D-glyceraldehyde-3-phosphate (G3P). This Sulfurimonas denitrificans (strain ATCC 33889 / DSM 1251) (Thiomicrospira denitrificans (strain ATCC 33889 / DSM 1251)) protein is Triosephosphate isomerase.